Reading from the N-terminus, the 431-residue chain is Fibrinogen C domain-containing protein 1 (431 aa).

Residues 1-3 (MLC) lie on the Cytoplasmic side of the membrane. The helical; Signal-anchor for type II membrane protein transmembrane segment at 4–24 (TVLLALAVLLAVAVTGAVLFL) threads the bilayer. Residues 25-431 (NHTHTPGTAP…MKIRPVREDR (407 aa)) are Extracellular-facing. The region spanning 205 to 428 (CATGSRPRDC…FSEMKIRPVR (224 aa)) is the Fibrinogen C-terminal domain. A disulfide bridge links C214 with C243. N310 carries N-linked (GlcNAc...) asparagine glycosylation. Ca(2+) is bound by residues D363 and D365. C371 and C384 form a disulfide bridge.

As to quaternary structure, homotetramer; disulfide-linked.

The protein localises to the membrane. Acetyl group-binding receptor which shows a high-affinity and calcium-dependent binding to acetylated structures such as chitin, some N-acetylated carbohydrates, and amino acids, but not to their non-acetylated counterparts. Can facilitate the endocytosis of acetylated components. The protein is Fibrinogen C domain-containing protein 1 (FIBCD1) of Macaca fascicularis (Crab-eating macaque).